The primary structure comprises 7756 residues: Linear gramicidin synthase subunit C (7756 aa).

Carrier domains are found at residues 977-1052, 2042-2116, 3557-3632, 4621-4695, 6141-6216, and 7200-7274; these read EPRN…AALQ, APAT…ADSS, APRT…ASLL, APAT…TVTD, APRK…AGLL, and APET…GDSV. O-(pantetheine 4'-phosphoryl)serine is present on residues S1012, S2077, S3592, S4656, S6176, and S7235.

The protein belongs to the ATP-dependent AMP-binding enzyme family. In terms of assembly, large multienzyme complex composed of 4 subunits; LgrA, LgrB, LgrC and LgrD. The cofactor is pantetheine 4'-phosphate.

In terms of biological role, activates the 7th to 12th amino acids (Val, D-Val, Trp, D-Leu, Xaa and D-Leu) in linear gramicidin and catalyzes the formation of the peptide bond between them. This enzyme is also responsible for the epimerization of the 8th (D-Val), the 10th (D-Leu) and 12th (D-Leu) amino acids. The 11th (Xaa) amino acid is Trp in linear gramicidin A; Phe in linear gramicidin B and Tyr in linear gramicidin C. The chain is Linear gramicidin synthase subunit C (lgrC) from Brevibacillus parabrevis.